Consider the following 174-residue polypeptide: Alpha-crystallin B chain (174 aa).

Residue Met-1 is modified to N-acetylmethionine. Positions 55–163 (RMPSWLETGL…PERSIPITRE (109 aa)) constitute a sHSP domain. Residues His-82, His-103, Glu-105, and His-110 each coordinate Zn(2+). Residues 148–174 (RKQSDVPERSIPITREEKPAIAGAQRK) form a disordered region. The segment covering 149-166 (KQSDVPERSIPITREEKP) has biased composition (basic and acidic residues).

It belongs to the small heat shock protein (HSP20) family. As to quaternary structure, heteromer composed of three CRYAA and one CRYAB subunits. Aggregates with homologous proteins, including the small heat shock protein HSPB1, to form large heteromeric complexes. Inter-subunit bridging via zinc ions enhances stability, which is crucial as there is no protein turn over in the lens. In terms of tissue distribution, lens as well as other tissues.

Its function is as follows. May contribute to the transparency and refractive index of the lens. In Anas platyrhynchos (Mallard), this protein is Alpha-crystallin B chain (CRYAB).